We begin with the raw amino-acid sequence, 249 residues long: MAHEIEIDSEADLGRTTFEAEDLYKQRTPITKPPAPRLQSRRASMQETPWTIKDSFNVETKDVVQRCIHTLIPTVNFFDVVDDRPDLYGPFWITTTVIQALFFSNSITEYARYATGHGTSGYSIKKLISAASIIYGYTTIIAVLLWGILVWNKCNPKLLDCLCLYGYANIVWLPVSLATPPFGLLSTLASHIVKYVLTGIGLLISIVFLTRNLYPICQQAGSNLCKLLLFGIIVFHCLLALSLQLIFFS.

A run of 5 helical transmembrane segments spans residues 87–107 (LYGP…SNSI), 131–151 (ASII…ILVW), 164–184 (LYGY…PFGL), 188–208 (LASH…SIVF), and 228–248 (LLFG…LIFF).

It belongs to the YIP1 family. In terms of assembly, interacts with the YIP1 family members yip1 and yip4, and several Rab GTPases. The C-terminal cysteines in the Rab GTPase ypt2 are essential for the interaction. Interacts with snx3.

The protein resides in the membrane. Its function is as follows. Possible role in vesicle-mediated transport. May be involved in proper membrane localization of Rab GTPases. The chain is Protein YIP5 from Schizosaccharomyces pombe (strain 972 / ATCC 24843) (Fission yeast).